A 669-amino-acid chain; its full sequence is DNA ligase (669 aa).

Residues 34–38 (DAEYD), 83–84 (SL), and Glu-114 contribute to the NAD(+) site. The active-site N6-AMP-lysine intermediate is the Lys-116. 4 residues coordinate NAD(+): Arg-137, Glu-171, Lys-287, and Lys-311. Residues Cys-405, Cys-408, Cys-423, and Cys-428 each contribute to the Zn(2+) site. Residues 591–669 (NVESYFAGKT…EERFLQELNK (79 aa)) form the BRCT domain.

The protein belongs to the NAD-dependent DNA ligase family. LigA subfamily. The cofactor is Mg(2+). Mn(2+) serves as cofactor.

The catalysed reaction is NAD(+) + (deoxyribonucleotide)n-3'-hydroxyl + 5'-phospho-(deoxyribonucleotide)m = (deoxyribonucleotide)n+m + AMP + beta-nicotinamide D-nucleotide.. Its function is as follows. DNA ligase that catalyzes the formation of phosphodiester linkages between 5'-phosphoryl and 3'-hydroxyl groups in double-stranded DNA using NAD as a coenzyme and as the energy source for the reaction. It is essential for DNA replication and repair of damaged DNA. This is DNA ligase from Bacillus cereus (strain B4264).